The following is a 517-amino-acid chain: Aspartyl/glutamyl-tRNA(Asn/Gln) amidotransferase subunit B (517 aa).

It belongs to the GatB/GatE family. GatB subfamily. As to quaternary structure, heterotrimer of A, B and C subunits.

The catalysed reaction is L-glutamyl-tRNA(Gln) + L-glutamine + ATP + H2O = L-glutaminyl-tRNA(Gln) + L-glutamate + ADP + phosphate + H(+). The enzyme catalyses L-aspartyl-tRNA(Asn) + L-glutamine + ATP + H2O = L-asparaginyl-tRNA(Asn) + L-glutamate + ADP + phosphate + 2 H(+). Allows the formation of correctly charged Asn-tRNA(Asn) or Gln-tRNA(Gln) through the transamidation of misacylated Asp-tRNA(Asn) or Glu-tRNA(Gln) in organisms which lack either or both of asparaginyl-tRNA or glutaminyl-tRNA synthetases. The reaction takes place in the presence of glutamine and ATP through an activated phospho-Asp-tRNA(Asn) or phospho-Glu-tRNA(Gln). This Thermobifida fusca (strain YX) protein is Aspartyl/glutamyl-tRNA(Asn/Gln) amidotransferase subunit B.